A 229-amino-acid polypeptide reads, in one-letter code: Putative N-acetylmannosamine-6-phosphate 2-epimerase (229 aa).

Belongs to the NanE family.

It catalyses the reaction an N-acyl-D-glucosamine 6-phosphate = an N-acyl-D-mannosamine 6-phosphate. It functions in the pathway amino-sugar metabolism; N-acetylneuraminate degradation; D-fructose 6-phosphate from N-acetylneuraminate: step 3/5. Converts N-acetylmannosamine-6-phosphate (ManNAc-6-P) to N-acetylglucosamine-6-phosphate (GlcNAc-6-P). This is Putative N-acetylmannosamine-6-phosphate 2-epimerase from Actinobacillus pleuropneumoniae serotype 3 (strain JL03).